The sequence spans 131 residues: D-ribose pyranase (131 aa).

The Proton donor role is filled by His20. Residues Asp28, His98, and Tyr120–Asn122 contribute to the substrate site.

This sequence belongs to the RbsD / FucU family. RbsD subfamily. Homodecamer.

The protein localises to the cytoplasm. The enzyme catalyses beta-D-ribopyranose = beta-D-ribofuranose. It functions in the pathway carbohydrate metabolism; D-ribose degradation; D-ribose 5-phosphate from beta-D-ribopyranose: step 1/2. Its function is as follows. Catalyzes the interconversion of beta-pyran and beta-furan forms of D-ribose. This is D-ribose pyranase from Lactobacillus gasseri (strain ATCC 33323 / DSM 20243 / BCRC 14619 / CIP 102991 / JCM 1131 / KCTC 3163 / NCIMB 11718 / NCTC 13722 / AM63).